A 196-amino-acid polypeptide reads, in one-letter code: Peroxiredoxin TSA1 (196 aa).

The Thioredoxin domain occupies 3 to 161 (AQVQKQAPTF…ALRLVEAFQW (159 aa)). Residue Lys14 forms a Glycyl lysine isopeptide (Lys-Gly) (interchain with G-Cter in ubiquitin) linkage. 45 to 47 (TFV) contributes to the substrate binding site. Cys48 functions as the Cysteine sulfenic acid (-SOH) intermediate in the catalytic mechanism. Residue Lys89 forms a Glycyl lysine isopeptide (Lys-Gly) (interchain with G-Cter in ubiquitin) linkage. Residue Arg124 participates in substrate binding. A Glycyl lysine isopeptide (Lys-Gly) (interchain with G-Cter in ubiquitin) cross-link involves residue Lys132. Thr174 is subject to Phosphothreonine.

It belongs to the peroxiredoxin family. AhpC/Prx1 subfamily. Homodimer; disulfide-linked, upon oxidation. Interacts with YAP1 via transient disulfide linkages. Post-translationally, the enzyme can be inactivated by further oxidation of the cysteine sulfenic acid (C(P)-SOH) to sulphinic acid (C(P)-SO2H) instead of its condensation to a disulfide bond. It can be reactivated by forming a transient disulfide bond with sulfiredoxin SRX1, which reduces the cysteine sulfinic acid in an ATP- and Mg-dependent manner.

It is found in the cytoplasm. The catalysed reaction is a hydroperoxide + [thioredoxin]-dithiol = an alcohol + [thioredoxin]-disulfide + H2O. Functionally, thiol-specific peroxidase that catalyzes the reduction of hydrogen peroxide and organic hydroperoxides to water and alcohols, respectively. Plays a role in cell protection against oxidative stress by detoxifying peroxides and as sensor of hydrogen peroxide-mediated signaling events. Protects the cell against the oxidative stress caused by nascent-protein misfolding and aggregation. Relays hydrogen peroxide as a signal to the transcription factor YAP1 by inducing the formation of intramolecular disulfide bonds in YAP1, which causes its nuclear accumulation and activation. Can act alternatively as peroxidase and molecular chaperone. Oxidative stress and heat shock exposure cause a reversible shift of the protein structure from low MW species to high MW complexes, triggering a peroxidase-to-chaperone functional switch. The chaperone function of the protein enhances resistance to heat shock. This Saccharomyces cerevisiae (strain ATCC 204508 / S288c) (Baker's yeast) protein is Peroxiredoxin TSA1.